A 303-amino-acid chain; its full sequence is Taste receptor type 2 member 13 (303 aa).

Residues 1 to 7 (MKSALPS) lie on the Extracellular side of the membrane. Residues 8–28 (IFTLVIIAEFIIGNLSNGFIV) form a helical membrane-spanning segment. Residues 29–55 (LINCIDWVSKRELSSVDKLLIILAISR) lie on the Cytoplasmic side of the membrane. A helical membrane pass occupies residues 56 to 76 (IGLIWEILVSWFLALHYLAIF). Residues 77 to 85 (VSGTGLRIM) lie on the Extracellular side of the membrane. A helical membrane pass occupies residues 86 to 106 (IFSWIVSNHFNLWLATILSIF). Residues 107–128 (YLLKIASFSSPAFLYLKWRVNK) are Cytoplasmic-facing. The chain crosses the membrane as a helical span at residues 129–149 (VILLILLGTLVFLFLNLIQIN). Over 150 to 184 (MHIKDWLDRYERNTTWNFSMSDFETFSVSVKFTMT) the chain is Extracellular. N-linked (GlcNAc...) asparagine glycosylation is found at Asn-162 and Asn-166. A helical transmembrane segment spans residues 185–205 (MFSLTPFTVAFISFLLLIFSL). At 206–232 (QKHLQKMQLNYKGHRDPKTKVHTNALK) the chain is on the cytoplasmic side. A helical transmembrane segment spans residues 233–253 (IVISFLLFYASFFLCVLXSWI). Over 254-261 (SELYQNTV) the chain is Extracellular. Residues 262-282 (IYMLCETIGVFYPSSHSFLLI) form a helical membrane-spanning segment. The Cytoplasmic segment spans residues 283-303 (LGNAKLRQAFLLVAAKVWAKR).

The protein belongs to the G-protein coupled receptor T2R family.

It localises to the membrane. Its function is as follows. Receptor that may play a role in the perception of bitterness and is gustducin-linked. May play a role in sensing the chemical composition of the gastrointestinal content. The activity of this receptor may stimulate alpha gustducin, mediate PLC-beta-2 activation and lead to the gating of TRPM5. This Gorilla gorilla gorilla (Western lowland gorilla) protein is Taste receptor type 2 member 13 (TAS2R13).